Here is a 351-residue protein sequence, read N- to C-terminus: Transmembrane protein 185-like (351 aa).

8 helical membrane-spanning segments follow: residues 16–36 (LIYA…DGII), 41–61 (WAVF…ASVG), 81–101 (FKAM…EVLV), 113–133 (WLLV…ACVW), 154–174 (FIFI…VVCV), 178–198 (ILMS…VLFL), 212–232 (ITMA…EILL), and 244–264 (YVPV…TTFG).

This sequence belongs to the TMEM185 family.

The protein localises to the membrane. The sequence is that of Transmembrane protein 185-like from Danio rerio (Zebrafish).